Here is a 298-residue protein sequence, read N- to C-terminus: Putative GATA zinc finger domain-containing protein 25 (298 aa).

Residues 4 to 37 are a coiled coil; it reads DNKNKNDNYQESIQRIVNQRNNLLKEIENKINQQ. Residues 148 to 227 are disordered; that stretch reads QQQLQQSHTK…RGRPSKPKPE (80 aa). Acidic residues predominate over residues 183 to 202; the sequence is EENEENEENEENEENEENEE. Basic and acidic residues predominate over residues 203–212; that stretch reads NKEKDVEVAK. A compositionally biased stretch (basic residues) spans 214-223; that stretch reads NKPKRGRPSK. The GATA-type; degenerate zinc finger occupies 229 to 256; it reads CFRYGTRSCPYWRKNVIKGELVDVCNAC.

This Dictyostelium discoideum (Social amoeba) protein is Putative GATA zinc finger domain-containing protein 25 (gtaY).